The following is a 245-amino-acid chain: GATA zinc finger domain-containing protein 1 (245 aa).

The segment at 9–33 (CSMCKTNTSSMWKKGSQGEILCNNC) adopts a GATA-type zinc-finger fold. The span at 39 to 70 (TAAGGNNNNNSSSSTSGSSSYTGTTFASTSTS) shows a compositional bias: low complexity. Residues 39-110 (TAAGGNNNNN…PAAEKKVSTK (72 aa)) are disordered. Over residues 71–80 (QQSNGGNTKQ) the composition is skewed to polar residues.

The protein localises to the nucleus. Functionally, component of some chromatin complex recruited to chromatin sites methylated 'Lys-4' of histone H3 (H3K4me), with a preference for trimethylated form (H3K4me3). This Xenopus laevis (African clawed frog) protein is GATA zinc finger domain-containing protein 1 (gatad1).